We begin with the raw amino-acid sequence, 149 residues long: Flagellar assembly factor FliW (149 aa).

This sequence belongs to the FliW family. As to quaternary structure, interacts with translational regulator CsrA and flagellin(s).

Its subcellular location is the cytoplasm. Its function is as follows. Acts as an anti-CsrA protein, binds CsrA and prevents it from repressing translation of its target genes, one of which is flagellin. Binds to flagellin and participates in the assembly of the flagellum. The protein is Flagellar assembly factor FliW of Thermotoga maritima (strain ATCC 43589 / DSM 3109 / JCM 10099 / NBRC 100826 / MSB8).